The following is a 612-amino-acid chain: Isocitrate dehydrogenase kinase/phosphatase (612 aa).

Residues 327 to 333 and K348 each bind ATP; that span reads APGIKGL. D383 is a catalytic residue. A disordered region spans residues 593 to 612; that stretch reads AGAASNEQDAPDAGRSVRAA.

This sequence belongs to the AceK family.

The protein localises to the cytoplasm. The catalysed reaction is L-seryl-[isocitrate dehydrogenase] + ATP = O-phospho-L-seryl-[isocitrate dehydrogenase] + ADP + H(+). Functionally, bifunctional enzyme which can phosphorylate or dephosphorylate isocitrate dehydrogenase (IDH) on a specific serine residue. This is a regulatory mechanism which enables bacteria to bypass the Krebs cycle via the glyoxylate shunt in response to the source of carbon. When bacteria are grown on glucose, IDH is fully active and unphosphorylated, but when grown on acetate or ethanol, the activity of IDH declines drastically concomitant with its phosphorylation. The protein is Isocitrate dehydrogenase kinase/phosphatase of Paraburkholderia xenovorans (strain LB400).